Here is a 234-residue protein sequence, read N- to C-terminus: Multicopy suppressor of SEC21 protein 28 (234 aa).

Residues 1 to 47 (MQTPPESTDVKLDTLNEPSAHLIEKNVALPKDIFRSYLSYWIYEIAR) are Cytoplasmic-facing. The residue at position 3 (T3) is a Phosphothreonine. Residues 48 to 68 (YTPVMILSLVIGVLVLLIIFF) form a helical membrane-spanning segment. Residues 69 to 72 (NDNE) are Extracellular-facing. Residues 73–93 (ACVFNSAIFAFTSLVGLLIIL) form a helical membrane-spanning segment. Topologically, residues 94–234 (SDGNPKLVSR…NIDALLKKTE (141 aa)) are cytoplasmic. Residues 231-234 (KKTE) are COPI binding.

The protein belongs to the DUP/COS family. In terms of assembly, interacts with MST27. Binds to coatomer proteins of COPI and SEC23/SEC24 of COPII coated vesicles.

It is found in the endoplasmic reticulum. It localises to the golgi apparatus. Its subcellular location is the cytoplasmic vesicle. The protein resides in the COPI-coated vesicle membrane. The protein localises to the COPII-coated vesicle membrane. In terms of biological role, involved in protein trafficking vesicle formation, probably by stabilizing of coatomer at the Golgi membrane and thus allowing the efficient formation of COPI coated vesicles. The sequence is that of Multicopy suppressor of SEC21 protein 28 (MST28) from Saccharomyces cerevisiae (strain ATCC 204508 / S288c) (Baker's yeast).